A 253-amino-acid polypeptide reads, in one-letter code: Phosphoadenosine 5'-phosphosulfate reductase (253 aa).

C239 functions as the Nucleophile; cysteine thiosulfonate intermediate in the catalytic mechanism.

It belongs to the PAPS reductase family. CysH subfamily.

The protein resides in the cytoplasm. The catalysed reaction is [thioredoxin]-disulfide + sulfite + adenosine 3',5'-bisphosphate + 2 H(+) = [thioredoxin]-dithiol + 3'-phosphoadenylyl sulfate. It participates in sulfur metabolism; hydrogen sulfide biosynthesis; sulfite from sulfate: step 3/3. In terms of biological role, catalyzes the formation of sulfite from phosphoadenosine 5'-phosphosulfate (PAPS) using thioredoxin as an electron donor. This Photobacterium profundum (strain SS9) protein is Phosphoadenosine 5'-phosphosulfate reductase.